The chain runs to 247 residues: Trypsin-4 (247 aa).

The N-terminal stretch at 1-15 (MKISIFFAFLGAAVA) is a signal peptide. Positions 16 to 23 (LPVNDDDK) are cleaved as a propeptide — activation peptide. The Peptidase S1 domain occupies 24–245 (IVGGYTCPKH…YLSWIQETMA (222 aa)). Disulfide bonds link cysteine 30–cysteine 161, cysteine 49–cysteine 65, cysteine 133–cysteine 234, cysteine 140–cysteine 207, cysteine 172–cysteine 186, and cysteine 197–cysteine 221. The active-site Charge relay system is the histidine 64. The Ca(2+) site is built by glutamate 76, asparagine 78, valine 81, and glutamate 86. Aspartate 108 acts as the Charge relay system in catalysis. Catalysis depends on serine 201, which acts as the Charge relay system.

Belongs to the peptidase S1 family. It depends on Ca(2+) as a cofactor. In terms of processing, proteolytically cleaved and activated by an autocatalytic mechanism. Cleavage by CTRC inhibits autoactivation.

It localises to the secreted. The protein localises to the extracellular space. It carries out the reaction Preferential cleavage: Arg-|-Xaa, Lys-|-Xaa.. With respect to regulation, activated by autocatalytic cleavage. Cleavage by CTRC inhibits autoactivation. Functionally, serine protease capable of autoactivation. The sequence is that of Trypsin-4 from Rattus norvegicus (Rat).